Here is a 465-residue protein sequence, read N- to C-terminus: Poly(A) polymerase I (465 aa).

Catalysis depends on residues Asp80, Asp82, and Asp162. Residues 430–465 (APPEQKGMLNELDDDPAPRRRRSRPRKRAPRREGTV) are disordered. A compositionally biased stretch (basic residues) spans 448–459 (RRRRSRPRKRAP).

It belongs to the tRNA nucleotidyltransferase/poly(A) polymerase family.

It catalyses the reaction RNA(n) + ATP = RNA(n)-3'-adenine ribonucleotide + diphosphate. Its function is as follows. Adds poly(A) tail to the 3' end of many RNAs, which usually targets these RNAs for decay. Plays a significant role in the global control of gene expression, through influencing the rate of transcript degradation, and in the general RNA quality control. This chain is Poly(A) polymerase I, found in Salmonella typhi.